Consider the following 264-residue polypeptide: MSDLLSALLLGILEGLTEFLPISSTGHLLIAQHWLGARSDFFNIVIQAGAIVAVVLVFRQRLLQLATGFGQRENREYVFKLGAAFLVTAVVGLVVRKAGWSLPETVSPVAWALIIGGIWMLLVEAYTARLPDRDQVTWTVAIGVGLAQVVAGVFPGTSRSASAIFLAMLLGLSRRAAAAEFVFLVGIPTMFAASAYTFLEMAKAGQLGSENWTEVGVAFLAAAVTGFVVVKWLMGYIKSHKFTAFALYRIALGAALLLWLPSGS.

Helical transmembrane passes span 38 to 58 (RSDF…VLVF), 75 to 95 (REYV…GLVV), 106 to 126 (VSPV…VEAY), 136 to 156 (VTWT…VFPG), 181 to 201 (FVFL…FLEM), 217 to 237 (VAFL…MGYI), and 242 to 262 (FTAF…WLPS).

Belongs to the UppP family.

The protein localises to the cell inner membrane. It carries out the reaction di-trans,octa-cis-undecaprenyl diphosphate + H2O = di-trans,octa-cis-undecaprenyl phosphate + phosphate + H(+). In terms of biological role, catalyzes the dephosphorylation of undecaprenyl diphosphate (UPP). Confers resistance to bacitracin. In Stenotrophomonas maltophilia (strain R551-3), this protein is Undecaprenyl-diphosphatase.